Here is a 512-residue protein sequence, read N- to C-terminus: tRNA-guanine(15) transglycosylase (512 aa).

The Nucleophile role is filled by aspartate 85. Aspartate 120 contributes to the substrate binding site. Zn(2+) contacts are provided by cysteine 272, cysteine 274, and cysteine 277.

The protein belongs to the archaeosine tRNA-ribosyltransferase family. It depends on Zn(2+) as a cofactor.

The enzyme catalyses guanosine(15) in tRNA + 7-cyano-7-deazaguanine = 7-cyano-7-carbaguanosine(15) in tRNA + guanine. It functions in the pathway tRNA modification; archaeosine-tRNA biosynthesis. Functionally, exchanges the guanine residue with 7-cyano-7-deazaguanine (preQ0) at position 15 in the dihydrouridine loop (D-loop) of archaeal tRNAs. The sequence is that of tRNA-guanine(15) transglycosylase from Aeropyrum pernix (strain ATCC 700893 / DSM 11879 / JCM 9820 / NBRC 100138 / K1).